The sequence spans 307 residues: Branched-chain-amino-acid aminotransferase (307 aa).

Lys-160 carries the post-translational modification N6-(pyridoxal phosphate)lysine.

The protein belongs to the class-IV pyridoxal-phosphate-dependent aminotransferase family. Pyridoxal 5'-phosphate serves as cofactor.

The enzyme catalyses L-leucine + 2-oxoglutarate = 4-methyl-2-oxopentanoate + L-glutamate. The catalysed reaction is L-isoleucine + 2-oxoglutarate = (S)-3-methyl-2-oxopentanoate + L-glutamate. It carries out the reaction L-valine + 2-oxoglutarate = 3-methyl-2-oxobutanoate + L-glutamate. It participates in amino-acid biosynthesis; L-isoleucine biosynthesis; L-isoleucine from 2-oxobutanoate: step 4/4. It functions in the pathway amino-acid biosynthesis; L-leucine biosynthesis; L-leucine from 3-methyl-2-oxobutanoate: step 4/4. The protein operates within amino-acid biosynthesis; L-valine biosynthesis; L-valine from pyruvate: step 4/4. Functionally, acts on leucine, isoleucine and valine. This is Branched-chain-amino-acid aminotransferase (ilvE) from Pseudomonas aeruginosa (strain ATCC 15692 / DSM 22644 / CIP 104116 / JCM 14847 / LMG 12228 / 1C / PRS 101 / PAO1).